Reading from the N-terminus, the 1157-residue chain is Pesticidal crystal protein Cry9Ca (1157 aa).

It belongs to the delta endotoxin family.

Functionally, promotes colloidosmotic lysis by binding to the midgut epithelial cells of Lepidoptera larvae. Has a fairly broad spectrum of activity against members of the Pyralidae, Plutellidae, Sphingidae and Noctuidae families. It was the first insecticidal crystal protein characterized with activity against cutworms. No activity is observed against some beetles, such as the Colorado potato beetle. This is Pesticidal crystal protein Cry9Ca (cry9Ca) from Bacillus thuringiensis subsp. tolworthi.